The sequence spans 327 residues: Tagatose 1,6-diphosphate aldolase 2 (327 aa).

The protein belongs to the aldolase LacD family.

The catalysed reaction is D-tagatofuranose 1,6-bisphosphate = D-glyceraldehyde 3-phosphate + dihydroxyacetone phosphate. It functions in the pathway carbohydrate metabolism; D-tagatose 6-phosphate degradation; D-glyceraldehyde 3-phosphate and glycerone phosphate from D-tagatose 6-phosphate: step 2/2. The polypeptide is Tagatose 1,6-diphosphate aldolase 2 (lacD2) (Streptococcus pyogenes serotype M1).